A 145-amino-acid polypeptide reads, in one-letter code: Deoxyuridine 5'-triphosphate nucleotidohydrolase (145 aa).

Substrate contacts are provided by residues R63 to G65, N76, and T80 to D82.

Belongs to the dUTPase family. The cofactor is Mg(2+).

The catalysed reaction is dUTP + H2O = dUMP + diphosphate + H(+). It participates in pyrimidine metabolism; dUMP biosynthesis; dUMP from dCTP (dUTP route): step 2/2. Functionally, this enzyme is involved in nucleotide metabolism: it produces dUMP, the immediate precursor of thymidine nucleotides and it decreases the intracellular concentration of dUTP so that uracil cannot be incorporated into DNA. This is Deoxyuridine 5'-triphosphate nucleotidohydrolase from Chlamydia pneumoniae (Chlamydophila pneumoniae).